The following is a 386-amino-acid chain: Bifunctional chorismate mutase/prephenate dehydratase (386 aa).

The Chorismate mutase domain maps to 1 to 92 (MTSENPLLAL…DSVLTQQALL (92 aa)). 7 residues coordinate substrate: arginine 11, arginine 28, lysine 39, aspartate 48, glutamate 52, serine 84, and glutamine 88. Residues 105–285 (RIAFLGPKGS…NFTRFVVLAR (181 aa)) enclose the Prephenate dehydratase domain. One can recognise an ACT domain in the interval 299 to 376 (TLLMATGQQA…RSMKVLGCYP (78 aa)).

It is found in the cytoplasm. The enzyme catalyses chorismate = prephenate. The catalysed reaction is prephenate + H(+) = 3-phenylpyruvate + CO2 + H2O. It participates in amino-acid biosynthesis; L-phenylalanine biosynthesis; phenylpyruvate from prephenate: step 1/1. Its pathway is metabolic intermediate biosynthesis; prephenate biosynthesis; prephenate from chorismate: step 1/1. Its function is as follows. Catalyzes the Claisen rearrangement of chorismate to prephenate and the decarboxylation/dehydration of prephenate to phenylpyruvate. This chain is Bifunctional chorismate mutase/prephenate dehydratase (pheA), found in Escherichia coli O157:H7.